A 1008-amino-acid chain; its full sequence is Ubiquitin carboxyl-terminal hydrolase 16 (1008 aa).

Residues 7 to 27 (LGISSLVLVVSLVLPLIGLFV) traverse the membrane as a helical segment. Cys74, Cys77, Cys85, Cys88, Cys94, Cys98, His107, and Cys111 together coordinate Zn(2+). An MYND-type zinc finger spans residues 74 to 111 (CPVCYCLATTRCSRCKAVRYCSGKCQIIHWRQGHKDEC). Disordered stretches follow at residues 122–149 (DESD…GPEP), 159–178 (LSNR…DNKD), 187–233 (VSVA…LDAH), 275–309 (SVHK…DPSL), and 326–379 (SDSC…YISD). Low complexity predominate over residues 193–203 (SGSSFSGFSSS). Basic and acidic residues predominate over residues 222–233 (ESERSESLLDAH). The span at 284–295 (GQNQSQSRSLHS) shows a compositional bias: polar residues. Residues 340-351 (SSLHFSFGSGSS) show a composition bias toward low complexity. The region spanning 542–847 (CGLINVGNSC…GAYMLFYARC (306 aa)) is the USP domain. Cys551 acts as the Nucleophile in catalysis. The Proton acceptor role is filled by His807. 2 disordered regions span residues 859–905 (KTEA…GNIQ) and 952–1008 (FIFG…GGER). Low complexity-rich tracts occupy residues 878 to 888 (STISRSVSTSS) and 965 to 992 (SETP…RSSP).

It belongs to the peptidase C19 family. As to quaternary structure, interacts with SHM1 and SHM4. Interacts with HIPP27. Expressed in flowers, siliques, rosette leaves, cauline leaves, stems and at a lower level in roots. In roots, expressed in the sieve elements.

It localises to the membrane. It carries out the reaction Thiol-dependent hydrolysis of ester, thioester, amide, peptide and isopeptide bonds formed by the C-terminal Gly of ubiquitin (a 76-residue protein attached to proteins as an intracellular targeting signal).. Functionally, recognizes and hydrolyzes the peptide bond at the C-terminal Gly of ubiquitin. Involved in the processing of poly-ubiquitin precursors as well as that of ubiquitinated proteins. Involved in salt tolerance by modulating sodium transport activity and repressing cell death at least partially through modulating SHM1 stability and activity. Involved in cadmium tolerance by interacting with HIPP27 and probably modulating its stability. The sequence is that of Ubiquitin carboxyl-terminal hydrolase 16 (UBP16) from Arabidopsis thaliana (Mouse-ear cress).